An 848-amino-acid polypeptide reads, in one-letter code: DIS3-like exonuclease 2 (848 aa).

The disordered stretch occupies residues 153 to 173 (KGDRNSGKTDNNSPNKTEKRC). Positions 345 and 354 each coordinate Mg(2+).

It belongs to the RNR ribonuclease family. DIS3L2 subfamily. Mg(2+) serves as cofactor. Mn(2+) is required as a cofactor. Cleaved by caspase ced-3 in vitro.

Its subcellular location is the cytoplasm. It is found in the P-body. Functionally, 3'-5'-exoribonuclease that specifically recognizes RNAs polyuridylated at their 3' end and mediates their degradation. Component of an exosome-independent RNA degradation pathway that mediates degradation of cytoplasmic mRNAs that have been deadenylated and subsequently uridylated at their 3'. The polypeptide is DIS3-like exonuclease 2 (Caenorhabditis elegans).